We begin with the raw amino-acid sequence, 191 residues long: Pyridoxal 5'-phosphate synthase subunit PdxT (191 aa).

52–54 is an L-glutamine binding site; it reads GES. The Nucleophile role is filled by C81. L-glutamine is bound by residues R108 and 136–137; that span reads IR. Active-site charge relay system residues include H172 and E174.

Belongs to the glutaminase PdxT/SNO family. In the presence of PdxS, forms a dodecamer of heterodimers. Only shows activity in the heterodimer.

The enzyme catalyses aldehydo-D-ribose 5-phosphate + D-glyceraldehyde 3-phosphate + L-glutamine = pyridoxal 5'-phosphate + L-glutamate + phosphate + 3 H2O + H(+). It carries out the reaction L-glutamine + H2O = L-glutamate + NH4(+). It functions in the pathway cofactor biosynthesis; pyridoxal 5'-phosphate biosynthesis. Catalyzes the hydrolysis of glutamine to glutamate and ammonia as part of the biosynthesis of pyridoxal 5'-phosphate. The resulting ammonia molecule is channeled to the active site of PdxS. This is Pyridoxal 5'-phosphate synthase subunit PdxT from Actinobacillus pleuropneumoniae serotype 5b (strain L20).